The primary structure comprises 861 residues: Glucans biosynthesis glucosyltransferase H (861 aa).

The next 6 helical transmembrane spans lie at 142–162, 188–208, 516–536, 573–593, 600–620, and 683–703; these read FILL…MKGI, VLPY…FCWV, VFLT…FLVL, LFST…MLIW, FGGV…SVLL, and FLWW…VSVI.

This sequence belongs to the glycosyltransferase 2 family. OpgH subfamily.

The protein localises to the cell inner membrane. It participates in glycan metabolism; osmoregulated periplasmic glucan (OPG) biosynthesis. Involved in the biosynthesis of osmoregulated periplasmic glucans (OPGs). The polypeptide is Glucans biosynthesis glucosyltransferase H (Pseudomonas aeruginosa (strain LESB58)).